Here is a 361-residue protein sequence, read N- to C-terminus: 3-dehydroquinate synthase (361 aa).

Residues 107-111 (GVIGD), 131-132 (TS), lysine 144, and lysine 153 each bind NAD(+). Zn(2+)-binding residues include glutamate 186, histidine 251, and histidine 268.

This sequence belongs to the sugar phosphate cyclases superfamily. Dehydroquinate synthase family. The cofactor is NAD(+). Co(2+) is required as a cofactor. Zn(2+) serves as cofactor.

The protein resides in the cytoplasm. The catalysed reaction is 7-phospho-2-dehydro-3-deoxy-D-arabino-heptonate = 3-dehydroquinate + phosphate. It functions in the pathway metabolic intermediate biosynthesis; chorismate biosynthesis; chorismate from D-erythrose 4-phosphate and phosphoenolpyruvate: step 2/7. In terms of biological role, catalyzes the conversion of 3-deoxy-D-arabino-heptulosonate 7-phosphate (DAHP) to dehydroquinate (DHQ). In Synechocystis sp. (strain ATCC 27184 / PCC 6803 / Kazusa), this protein is 3-dehydroquinate synthase.